A 346-amino-acid polypeptide reads, in one-letter code: L-threonine dehydratase catabolic TdcB (346 aa).

59–60 (FT) is an AMP binding site. Position 64 is an N6-(pyridoxal phosphate)lysine (Lys-64). AMP is bound by residues Gln-94, 125 to 126 (GY), and Asn-321.

The protein belongs to the serine/threonine dehydratase family. In the native structure, TdcB is in a dimeric form, whereas in the TdcB-AMP complex, it exists in a tetrameric form (dimer of dimers). The cofactor is pyridoxal 5'-phosphate.

The enzyme catalyses L-threonine = 2-oxobutanoate + NH4(+). Its pathway is amino-acid degradation; L-threonine degradation via propanoate pathway; propanoate from L-threonine: step 1/4. With respect to regulation, each protein molecule can bind up to four molecules of AMP, which act as an allosteric activator to the enzyme. Its function is as follows. Catalyzes the anaerobic formation of alpha-ketobutyrate and ammonia from threonine in a two-step reaction. The first step involved a dehydration of threonine and a production of enamine intermediates (aminocrotonate), which tautomerizes to its imine form (iminobutyrate). Both intermediates are unstable and short-lived. The second step is the nonenzymatic hydrolysis of the enamine/imine intermediates to form 2-ketobutyrate and free ammonia. In the low water environment of the cell, the second step is accelerated by RidA. This Staphylococcus aureus (strain USA300) protein is L-threonine dehydratase catabolic TdcB (tdcB).